The primary structure comprises 235 residues: uncharacterized protein (235 aa).

Residues 82–221 form the N-acetyltransferase domain; the sequence is LAFKKFPPDP…DTGELIRESP (140 aa).

It belongs to the acetyltransferase family.

The protein localises to the golgi apparatus membrane. The protein resides in the endoplasmic reticulum membrane. This is an uncharacterized protein from Schizosaccharomyces pombe (strain 972 / ATCC 24843) (Fission yeast).